The sequence spans 821 residues: KN motif and ankyrin repeat domain-containing protein 3 (821 aa).

A compositionally biased stretch (polar residues) spans Met1 to Leu10. 4 disordered regions span residues Met1–Val36, Gly58–Gln184, Leu224–Thr333, and Ala385–Glu547. The segment covering Arg77–Ala88 has biased composition (low complexity). Basic and acidic residues predominate over residues Pro128–Ala150. Low complexity predominate over residues Pro151–Ala181. 6 positions are modified to phosphoserine: Ser152, Ser160, Ser164, Ser167, Ser168, and Ser177. Positions Ala181–Gln230 form a coiled coil. Basic and acidic residues predominate over residues Ala237–Gly261. A phosphoserine mark is found at Ser271, Ser280, and Ser293. The stretch at Gly367–Thr404 forms a coiled coil. Low complexity-rich tracts occupy residues Glu388–Ala400 and Asn494–Gly507. ANK repeat units lie at residues Asn622–Arg652, Ala656–Ala690, Thr695–Ala724, Asp728–Ile758, and Glu762–His785. A disordered region spans residues Ala784–Gln821. Residues Ser787–Thr805 show a composition bias toward polar residues.

Strongly expressed in breast, liver, lung, skeletal muscle and kidney.

In terms of biological role, may be involved in the control of cytoskeleton formation by regulating actin polymerization. In Homo sapiens (Human), this protein is KN motif and ankyrin repeat domain-containing protein 3.